The primary structure comprises 315 residues: Deoxyhypusine hydroxylase (315 aa).

HEAT-like PBS-type repeat units lie at residues 23-52 (IAKR…LNDK), 56-82 (LRHE…LVKN), 89-115 (VRHE…YSND), 179-205 (NRYR…GLKD), 211-237 (LRHE…CVLD), and 244-270 (VRHE…LLQD). 3 residues coordinate Fe cation: histidine 58, histidine 91, and glutamate 92. 3 residues coordinate Fe cation: histidine 213, histidine 246, and glutamate 247.

It belongs to the deoxyhypusine hydroxylase family. It depends on Fe(2+) as a cofactor.

The catalysed reaction is [eIF5A protein]-deoxyhypusine + AH2 + O2 = [eIF5A protein]-hypusine + A + H2O. Its pathway is protein modification; eIF5A hypusination. In terms of biological role, catalyzes the hydroxylation of the N(6)-(4-aminobutyl)-L-lysine intermediate produced by deoxyhypusine synthase/DHPS on a critical lysine of the eukaryotic translation initiation factor 5A/eIF-5A. This is the second step of the post-translational modification of that lysine into an unusual amino acid residue named hypusine. Hypusination is unique to mature eIF-5A factor and is essential for its function. This chain is Deoxyhypusine hydroxylase (dohh-1), found in Dictyostelium discoideum (Social amoeba).